We begin with the raw amino-acid sequence, 111 residues long: Nucleoid-associated protein Cag_1190 (111 aa).

This sequence belongs to the YbaB/EbfC family. As to quaternary structure, homodimer.

It localises to the cytoplasm. The protein resides in the nucleoid. In terms of biological role, binds to DNA and alters its conformation. May be involved in regulation of gene expression, nucleoid organization and DNA protection. The polypeptide is Nucleoid-associated protein Cag_1190 (Chlorobium chlorochromatii (strain CaD3)).